The sequence spans 82 residues: Bowman-Birk type proteinase inhibitor (82 aa).

The segment at 1–24 (SGHHDETTDEPSESSKPCCDQCSC) is disordered. Disulfide bonds link Cys-18-Cys-72, Cys-19-Cys-34, Cys-22-Cys-68, Cys-24-Cys-32, Cys-42-Cys-49, Cys-46-Cys-61, and Cys-51-Cys-59.

This sequence belongs to the Bowman-Birk serine protease inhibitor family.

Trypsin and chymotrypsin are inhibited simultaneously. There are two separate reactive sites for trypsin and chymotrypsin but they do not inhibit simultaneously. The sequence is that of Bowman-Birk type proteinase inhibitor from Phaseolus angularis (Azuki bean).